A 370-amino-acid chain; its full sequence is Putative alanine racemase 2 (370 aa).

Lys-38 functions as the Proton acceptor; specific for D-alanine in the catalytic mechanism. Lys-38 bears the N6-(pyridoxal phosphate)lysine mark. The Proton acceptor; specific for L-alanine role is filled by Tyr-266.

Belongs to the alanine racemase family. The cofactor is pyridoxal 5'-phosphate.

The catalysed reaction is L-alanine = D-alanine. In Schizosaccharomyces pombe (strain 972 / ATCC 24843) (Fission yeast), this protein is Putative alanine racemase 2 (alr2).